Here is a 426-residue protein sequence, read N- to C-terminus: 3-phosphoshikimate 1-carboxyvinyltransferase (426 aa).

3-phosphoshikimate contacts are provided by Lys-22, Ser-23, and Arg-27. Residue Lys-22 participates in phosphoenolpyruvate binding. Residues Gly-96 and Arg-124 each coordinate phosphoenolpyruvate. 2 residues coordinate 3-phosphoshikimate: Ser-170 and Ser-171. Residue Gln-172 coordinates phosphoenolpyruvate. Positions 198, 314, 337, and 341 each coordinate 3-phosphoshikimate. Residue Asp-314 is the Proton acceptor of the active site. Residues Arg-345, Arg-387, and Lys-412 each contribute to the phosphoenolpyruvate site.

The protein belongs to the EPSP synthase family. In terms of assembly, homotetramer.

It localises to the cytoplasm. It carries out the reaction 3-phosphoshikimate + phosphoenolpyruvate = 5-O-(1-carboxyvinyl)-3-phosphoshikimate + phosphate. Its pathway is metabolic intermediate biosynthesis; chorismate biosynthesis; chorismate from D-erythrose 4-phosphate and phosphoenolpyruvate: step 6/7. Its function is as follows. Catalyzes the transfer of the enolpyruvyl moiety of phosphoenolpyruvate (PEP) to the 5-hydroxyl of shikimate-3-phosphate (S3P) to produce enolpyruvyl shikimate-3-phosphate and inorganic phosphate. This is 3-phosphoshikimate 1-carboxyvinyltransferase from Vibrio cholerae serotype O1 (strain ATCC 39315 / El Tor Inaba N16961).